The primary structure comprises 304 residues: MFSVLSYGRLVARAVLGGLSQTDPRAGGGGGGDYGLVTAGCGFGKDFRKGLLKKGACYGDDACFVARHRSADVLGVADGVGGWRDYGVDPSQFSGTLMRTCERLVKEGRFVPSNPIGILTTSYCELLQNKVPLLGSSTACIVVLDRTSHRLHTANLGDSGFLVVRGGEVVHRSDEQQHYFNTPFQLSIAPPEAEGVVLSDSPDAADSTSFDVQLGDIILTATDGLFDNMPDYMILQELKKLKNSNYESIQQTARSIAEQAHELAYDPNYMSPFAQFACDNGLNVRGGKPDDITVLLSIVAEYTD.

The N-terminal 68 residues, 1 to 68, are a transit peptide targeting the mitochondrion; that stretch reads MFSVLSYGRL…GDDACFVARH (68 aa). The PPM-type phosphatase domain occupies 69–299; sequence RSADVLGVAD…DDITVLLSIV (231 aa). Residues Asp78, Gly79, and Asp223 each coordinate Mn(2+).

This sequence belongs to the PP2C family. Interacts with FBXL4, BNIP3 and NIX; these interactions are important for ubiquitination and degradation of BNIP3 and NIX. Mg(2+) is required as a cofactor. It depends on Mn(2+) as a cofactor. As to expression, expressed in keratinocytes (at protein level).

Its subcellular location is the mitochondrion matrix. The catalysed reaction is O-phospho-L-seryl-[protein] + H2O = L-seryl-[protein] + phosphate. It carries out the reaction O-phospho-L-threonyl-[protein] + H2O = L-threonyl-[protein] + phosphate. Its activity is regulated as follows. Inhibited by sodium orthovanadate. Functionally, protein phosphatase that plays an essential role in mitochondrial metabolism and biogenesis. Positively regulates biosynthesis of the ubiquinone, coenzyme Q. Dephosphorylates the ubiquinone biosynthesis protein COQ7 which is likely to lead to its activation. Serves as a crucial sensor for mitophagy, though the underlying mechanism remains ambiguous. May dephosphorylate BNIP3 and NIX and thereby directly regulates mitophagy receptor function and stability. Alternatively, promotes SCF-FBXL4-dependent ubiquitination and degradation of BNIP3 and NIX independently of its catalytic activity to restrain mitophagy. This Homo sapiens (Human) protein is Protein phosphatase PTC7 homolog (PPTC7).